The sequence spans 321 residues: Transaldolase (321 aa).

The active-site Schiff-base intermediate with substrate is the K132.

It belongs to the transaldolase family. Type 1 subfamily. As to quaternary structure, homodimer.

It localises to the cytoplasm. It catalyses the reaction D-sedoheptulose 7-phosphate + D-glyceraldehyde 3-phosphate = D-erythrose 4-phosphate + beta-D-fructose 6-phosphate. Its pathway is carbohydrate degradation; pentose phosphate pathway; D-glyceraldehyde 3-phosphate and beta-D-fructose 6-phosphate from D-ribose 5-phosphate and D-xylulose 5-phosphate (non-oxidative stage): step 2/3. Functionally, transaldolase is important for the balance of metabolites in the pentose-phosphate pathway. In Rhizobium leguminosarum bv. trifolii (strain WSM2304), this protein is Transaldolase.